The sequence spans 174 residues: uncharacterized protein (174 aa).

2 stretches are compositionally biased toward basic and acidic residues: residues 1 to 31 and 52 to 67; these read MDKH…GKEG and EPPR…ERRS. A disordered region spans residues 1–69; sequence MDKHGVKTPL…GEGRERRSVS (69 aa).

This is an uncharacterized protein from Homo sapiens (Human).